A 141-amino-acid polypeptide reads, in one-letter code: Superoxide dismutase [Cu-Zn], chloroplastic (141 aa).

Cu cation-binding residues include His-33, His-35, and His-50. Cys-44 and Cys-133 are oxidised to a cystine. Positions 50, 58, 67, and 70 each coordinate Zn(2+). Residue His-107 participates in Cu cation binding.

The protein belongs to the Cu-Zn superoxide dismutase family. In terms of assembly, homotetramer. It depends on Cu cation as a cofactor. Requires Zn(2+) as cofactor.

The protein localises to the plastid. Its subcellular location is the chloroplast. It catalyses the reaction 2 superoxide + 2 H(+) = H2O2 + O2. Functionally, destroys radicals which are normally produced within the cells and which are toxic to biological systems. The protein is Superoxide dismutase [Cu-Zn], chloroplastic (SODCP) of Pinus sylvestris (Scotch pine).